The sequence spans 430 residues: Protein AST2 (430 aa).

In terms of biological role, lipid raft-associated protein involved in the targeting of PMA1 from Golgi to the plasma membrane. May induce clustering of PMA1, which facilitates partition of PMA1 into lipid rafts after leaving the ER its and transport to the cell surface. This is Protein AST2 from Saccharomyces cerevisiae (strain ATCC 204508 / S288c) (Baker's yeast).